The chain runs to 135 residues: CDGSH iron-sulfur domain-containing protein 2A (135 aa).

Over Met1–Glu37 the chain is Lumenal. A helical membrane pass occupies residues Trp38–Leu60. Residues Pro61–Leu135 are Cytoplasmic-facing. 4 residues coordinate [2Fe-2S] cluster: Cys99, Cys101, Cys110, and His114.

It belongs to the CISD protein family. CISD2 subfamily. In terms of assembly, homodimer. Requires [2Fe-2S] cluster as cofactor.

It localises to the endoplasmic reticulum membrane. It is found in the mitochondrion outer membrane. In terms of biological role, regulator of autophagy that contributes to antagonize becn1-mediated cellular autophagy at the endoplasmic reticulum. Participates in the interaction of bcl2 with becn1 and is required for bcl2-mediated depression of endoplasmic reticulum Ca(2+) stores during autophagy. This chain is CDGSH iron-sulfur domain-containing protein 2A (cisd2a), found in Salmo salar (Atlantic salmon).